The following is a 341-amino-acid chain: Ribulose-5-phosphate reductase 1 (341 aa).

The Zn(2+) site is built by C38, H64, E65, and E144.

The protein belongs to the zinc-containing alcohol dehydrogenase family. In terms of assembly, heterodimer together with TarI. Can also form a dimer of heterodimers. Zn(2+) is required as a cofactor.

The catalysed reaction is D-ribitol 5-phosphate + NADP(+) = D-ribulose 5-phosphate + NADPH + H(+). Its pathway is cell wall biogenesis; poly(ribitol phosphate) teichoic acid biosynthesis. Its function is as follows. Catalyzes the NADPH dependent reduction of D-ribulose 5-phosphate to D-ribitol 5-phosphate. The chain is Ribulose-5-phosphate reductase 1 from Staphylococcus aureus (strain NCTC 8325 / PS 47).